The primary structure comprises 354 residues: Tribbles homolog 3 (354 aa).

An interaction with DDIT3/CHOP region spans residues 1–127; sequence MRATPLAASA…QHVARPTEVL (127 aa). The interval 36 to 61 is disordered; the sequence is RDEPEPGPLPSLLPPSPPPASDLSPA. The span at 41–55 shows a compositional bias: pro residues; the sequence is PGPLPSLLPPSPPPA. The Protein kinase domain occupies 68 to 315; the sequence is LGPYILLERE…ALGILLHPWL (248 aa). Over residues 320–333 the composition is skewed to basic and acidic residues; sequence GRVSPPQSDRREMD. A disordered region spans residues 320–354; the sequence is GRVSPPQSDRREMDQVVPDGPQLEEAEEGEVGLYG. Over residues 341–354 the composition is skewed to acidic residues; that stretch reads QLEEAEEGEVGLYG.

This sequence belongs to the protein kinase superfamily. CAMK Ser/Thr protein kinase family. Tribbles subfamily. Interacts with AKT1, AKT2, MAP2K1 and MAP2K7. Interacts with ATF4. Interacts with DDIT3/CHOP and inhibits its interaction with EP300/P300. Interacts with APOBEC3C. Interacts (via N-terminus) with APOBEC3A. Interacts with RELA. In terms of tissue distribution, highly expressed in liver. Not detected in heart, brain, spleen, lung, skeletal muscle, kidney or testis.

The protein localises to the nucleus. Functionally, inactive protein kinase which acts as a regulator of the integrated stress response (ISR), a process for adaptation to various stress. Inhibits the transcriptional activity of DDIT3/CHOP and is involved in DDIT3/CHOP-dependent cell death during ER stress. May play a role in programmed neuronal cell death but does not appear to affect non-neuronal cells. Acts as a negative feedback regulator of the ATF4-dependent transcription during the ISR: while TRIB3 expression is promoted by ATF4, TRIB3 protein interacts with ATF4 and inhibits ATF4 transcription activity. Disrupts insulin signaling by binding directly to Akt kinases and blocking their activation. May bind directly to and mask the 'Thr-308' phosphorylation site in AKT1. Interacts with the NF-kappa-B transactivator p65 RELA and inhibits its phosphorylation and thus its transcriptional activation activity. Interacts with MAPK kinases and regulates activation of MAP kinases. Can inhibit APOBEC3A editing of nuclear DNA. This chain is Tribbles homolog 3 (Trib3), found in Mus musculus (Mouse).